We begin with the raw amino-acid sequence, 135 residues long: Retinol-binding protein 1 (135 aa).

Omega-N-methylarginine is present on W9. Positions 22-32 (RALDVNVALRK) are important for interaction with STRA6. Residues K41, M63, and Q109 each contribute to the all-trans-retinol site.

The protein belongs to the calycin superfamily. Fatty-acid binding protein (FABP) family. As to quaternary structure, interacts (only as retinol-free apoprotein) with STRA6. Detected in nearly all the tissues with higher expression in adult ovary, pancreas, pituitary gland and adrenal gland, and fetal liver.

It is found in the cytoplasm. The protein resides in the lipid droplet. In terms of biological role, cytoplasmic retinol-binding protein. Accepts retinol from the transport protein STRA6, and thereby contributes to retinol uptake, storage and retinoid homeostasis. The polypeptide is Retinol-binding protein 1 (RBP1) (Homo sapiens (Human)).